A 101-amino-acid chain; its full sequence is MFNLKREHFRDDYLYRFYQYGDTHSKIPSNLYKVLARKLDMISASENINDLRSPPANHLELLEPKENKIYSIRVNKQYCLIFKYENNEVNNLYLDPHSYNL.

This is an uncharacterized protein from Haemophilus influenzae (strain ATCC 51907 / DSM 11121 / KW20 / Rd).